A 174-amino-acid chain; its full sequence is MEGWDPNTKSTLTRIPLLTTKAGPRDGAAWTQRLKEEYKSLIAYTQMNKSNDNDWFRISASNPEGTRWTGKCWYVHNLLKYEFDLQFDIPITYPATAPELELPEIDGKTQKMYRGGKICLTVHFKPLWAKNCPRFGIAHALCLGLAPWLAAEIPILVDSGAIKHKDDAATSAES.

C119 functions as the Glycyl thioester intermediate in the catalytic mechanism.

This sequence belongs to the ubiquitin-conjugating enzyme family. UFC1 subfamily.

Functionally, E2-like enzyme which forms an intermediate with UFM1 via a thioester linkage. The polypeptide is Ubiquitin-fold modifier-conjugating enzyme 1 (Arabidopsis thaliana (Mouse-ear cress)).